Here is a 164-residue protein sequence, read N- to C-terminus: Elicitin-like protein 2 (164 aa).

Positions 1–22 (MFSKTLVVLAAVAAVTVNGLTA) are cleaved as a signal peptide. 3 disulfides stabilise this stretch: C25–C91, C47–C76, and C71–C118. Residues 121-164 (ISGGGSTPTTAPPSGTTPTTPTTAPPTGTTPGVTPSPTTPKPAC) form a disordered region. Over residues 127-156 (TPTTAPPSGTTPTTPTTAPPTGTTPGVTPS) the composition is skewed to low complexity.

Belongs to the elicitin family.

It is found in the secreted. In terms of biological role, induces local and distal defense responses (incompatible hypersensitive reaction) in plants from the solanaceae and cruciferae families. Elicits leaf necrosis and causes the accumulation of pathogenesis-related proteins. Might interact with the lipidic molecules of the plasma membrane. In Pythium oligandrum (Mycoparasitic fungus), this protein is Elicitin-like protein 2 (POD-2).